A 37-amino-acid chain; its full sequence is Large ribosomal subunit protein bL36 (37 aa).

This sequence belongs to the bacterial ribosomal protein bL36 family.

The sequence is that of Large ribosomal subunit protein bL36 from Clostridium perfringens (strain ATCC 13124 / DSM 756 / JCM 1290 / NCIMB 6125 / NCTC 8237 / Type A).